Consider the following 607-residue polypeptide: Hemagglutinin glycoprotein (607 aa).

At 1 to 37 (MLSYQDKAGAFYKDNARANSTKLSLVTEEHGGRRPPY) the chain is on the intravirion side. A helical transmembrane segment spans residues 38-58 (LLFVLLVLLVGILALLAITGV). Residues 59–607 (RFHQVSTSNM…IRFSCNRSNP (549 aa)) are Virion surface-facing. N-linked (GlcNAc...) asparagine; by host glycosylation is found at N149, N391, N422, N456, N587, and N603.

The protein belongs to the paramyxoviruses hemagglutinin-neuraminidase family. Non-sialidase subfamily. Binds canine SLAMF1 at the cell surface.

The protein resides in the virion membrane. Its subcellular location is the host cell membrane. Attaches the virus to cell receptors and thereby initiating infection. Binding of H protein to the receptor induces a conformational change that allows the F protein to trigger virion/cell membranes fusion. The cellular receptor might be SLAM, and may explain the lymphotropism of the virus. This is Hemagglutinin glycoprotein (H) from Ailuropoda melanoleuca (Giant panda).